Consider the following 307-residue polypeptide: Ribonuclease Z (307 aa).

Residues H63, H65, D67, H68, H141, D212, and H270 each coordinate Zn(2+). D67 functions as the Proton acceptor in the catalytic mechanism.

The protein belongs to the RNase Z family. In terms of assembly, homodimer. It depends on Zn(2+) as a cofactor.

It carries out the reaction Endonucleolytic cleavage of RNA, removing extra 3' nucleotides from tRNA precursor, generating 3' termini of tRNAs. A 3'-hydroxy group is left at the tRNA terminus and a 5'-phosphoryl group is left at the trailer molecule.. Functionally, zinc phosphodiesterase, which displays some tRNA 3'-processing endonuclease activity. Probably involved in tRNA maturation, by removing a 3'-trailer from precursor tRNA. This chain is Ribonuclease Z, found in Bacillus cereus (strain G9842).